The following is a 159-amino-acid chain: uncharacterized protein (159 aa).

3 consecutive transmembrane segments (helical) span residues 17 to 37, 44 to 64, and 67 to 87; these read FFFFFFFFSLPLSSFKLNLSS, WLIVFLLDFGEIMFPAPPLPI, and FSGALLPLSLFLGFLDVDLIA.

Its subcellular location is the membrane. This is an uncharacterized protein from Saccharomyces cerevisiae (strain ATCC 204508 / S288c) (Baker's yeast).